Reading from the N-terminus, the 494-residue chain is Nuclear distribution protein PAC1 (494 aa).

A LisH domain is found at 14 to 46; sequence QKNELDKSVLRYLNWNYKQTVRHEHAQDYESVR. The stretch at 90–123 forms a coiled coil; it reads NSIVRLQKKIIELEQNTETLVSQIKDLNTQVSEL. 7 WD repeats span residues 153–192, 196–244, 251–292, 295–334, 347–395, 415–454, and 457–492; these read NVES…IPLA, SHTK…CKFQ, GHEH…SLKT, PHSQ…SVGT, HFIE…LMAH, GHLS…HVWE, and HTGF…SNVF.

It belongs to the WD repeat LIS1/nudF family. In terms of assembly, self-associates. Interacts with NDL1 and dynein.

It localises to the cytoplasm. The protein localises to the cytoskeleton. The protein resides in the spindle pole. In terms of biological role, positively regulates the activity of the minus-end directed microtubule motor protein dynein. Plays a central role in positioning the mitotic spindle at the bud neck during cell division. Targets cytoplasmic dynein to microtubule plus ends, thereby promoting dynein-mediated microtubule sliding along the bud cortex and consequently the movement of the mitotic spindle to the bud neck. In Saccharomyces cerevisiae (strain YJM789) (Baker's yeast), this protein is Nuclear distribution protein PAC1.